The chain runs to 284 residues: MEMO1 family protein MmarC6_1286 (284 aa).

This sequence belongs to the MEMO1 family.

This is MEMO1 family protein MmarC6_1286 from Methanococcus maripaludis (strain C6 / ATCC BAA-1332).